Reading from the N-terminus, the 302-residue chain is MRHLISMRDIGREEILNILDESERMEAILNEKGHCDFLNGRILATLFYEPSTRTRLSFETAMKRLGGNVIGFTDISNTSVTKGESLADTIKVISGYSDLIAIRHPSEGAARLSGENSKVPVINAGDGSNQHPTQTLLDLYTIKREVGHIENLKIAFIGDLKYGRTVHSLCQALSLFKGVEIKLISPEELKMPREVIEDIDGKIKLSEMTDVEIEDVDVVYMTRIQKERFVDVNEYYKVKGIYRLSKEHIGDKDVVIMHPLPRVDEIDSEVDNLPQARYFKQSFYGVPVRMAILKLLFEDSVK.

Carbamoyl phosphate contacts are provided by Arg53 and Thr54. Lys82 contacts L-aspartate. Positions 103, 131, and 134 each coordinate carbamoyl phosphate. Arg164 and Arg223 together coordinate L-aspartate. 2 residues coordinate carbamoyl phosphate: Leu260 and Pro261.

Belongs to the aspartate/ornithine carbamoyltransferase superfamily. ATCase family. In terms of assembly, heterooligomer of catalytic and regulatory chains.

It carries out the reaction carbamoyl phosphate + L-aspartate = N-carbamoyl-L-aspartate + phosphate + H(+). It participates in pyrimidine metabolism; UMP biosynthesis via de novo pathway; (S)-dihydroorotate from bicarbonate: step 2/3. Its function is as follows. Catalyzes the condensation of carbamoyl phosphate and aspartate to form carbamoyl aspartate and inorganic phosphate, the committed step in the de novo pyrimidine nucleotide biosynthesis pathway. This chain is Aspartate carbamoyltransferase catalytic subunit, found in Methanococcus maripaludis (strain C5 / ATCC BAA-1333).